Consider the following 510-residue polypeptide: tRNA-2-methylthio-N(6)-dimethylallyladenosine synthase (510 aa).

The disordered stretch occupies residues 1–25 (MSGFNDSPVPESAEKADGLLSQERG). In terms of domain architecture, MTTase N-terminal spans 34–154 (RKLFVKSYGC…LPDLLRRVAH (121 aa)). Positions 43, 79, 117, 195, 199, and 202 each coordinate [4Fe-4S] cluster. Residues 181-414 (AERGVGAFVT…QALLEEQRQA (234 aa)) form the Radical SAM core domain. A TRAM domain is found at 417-479 (KAMIGRVLPV…PNSFHGRLLA (63 aa)). Over residues 484 to 493 (QESAQGQESA) the composition is skewed to polar residues. The tract at residues 484 to 510 (QESAQGQESAQGMERMEQNARAWEVPV) is disordered.

Belongs to the methylthiotransferase family. MiaB subfamily. As to quaternary structure, monomer. [4Fe-4S] cluster serves as cofactor.

The protein resides in the cytoplasm. The catalysed reaction is N(6)-dimethylallyladenosine(37) in tRNA + (sulfur carrier)-SH + AH2 + 2 S-adenosyl-L-methionine = 2-methylsulfanyl-N(6)-dimethylallyladenosine(37) in tRNA + (sulfur carrier)-H + 5'-deoxyadenosine + L-methionine + A + S-adenosyl-L-homocysteine + 2 H(+). Its function is as follows. Catalyzes the methylthiolation of N6-(dimethylallyl)adenosine (i(6)A), leading to the formation of 2-methylthio-N6-(dimethylallyl)adenosine (ms(2)i(6)A) at position 37 in tRNAs that read codons beginning with uridine. In Beijerinckia indica subsp. indica (strain ATCC 9039 / DSM 1715 / NCIMB 8712), this protein is tRNA-2-methylthio-N(6)-dimethylallyladenosine synthase.